The primary structure comprises 570 residues: Glutamate--tRNA ligase, chloroplastic/mitochondrial (570 aa).

A chloroplast and mitochondrion-targeting transit peptide spans methionine 1 to phenylalanine 39. L-glutamate is bound at residue arginine 57 to alanine 59. A 'HIGH' region motif is present at residues proline 60–glycine 70. ATP is bound at residue histidine 67. L-glutamate is bound by residues glutamate 93, tyrosine 245 to valine 249, and arginine 263. ATP is bound by residues glutamate 266 and lysine 301 to arginine 305. The short motif at lysine 301 to arginine 305 is the 'KMSKS' region element.

The protein belongs to the class-I aminoacyl-tRNA synthetase family. Glutamate--tRNA ligase type 1 subfamily.

The protein resides in the plastid. It localises to the chloroplast. It is found in the mitochondrion. It carries out the reaction tRNA(Glu) + L-glutamate + ATP = L-glutamyl-tRNA(Glu) + AMP + diphosphate. In terms of biological role, catalyzes the attachment of glutamate to tRNA(Glu) in a two-step reaction: glutamate is first activated by ATP to form Glu-AMP and then transferred to the acceptor end of tRNA(Glu). This chain is Glutamate--tRNA ligase, chloroplastic/mitochondrial, found in Arabidopsis thaliana (Mouse-ear cress).